We begin with the raw amino-acid sequence, 121 residues long: MVQIVISSARAGGLAEWVLMELQGEIEARYSTGLAGNLLGDLHYTTEGIPVLIVGHHILYGKIIHLEKPFAVLVKHTPGDQDCDELGRETGTRYLVTALIKDKILFKTRPKPIITSVPKKV.

Belongs to the CTF8 family. In terms of assembly, component of the CTF18-RFC complex, which consists of CTF18, CTF8, DSCC1, RFC2, RFC3, RFC4 and RFC5. The CTF18-RFC complex does not interact with the Rad9/Rad1/Hus1 complex. The CTF18-RFC complex interacts with POLH. CTF18/CTF8/DSCC1 associate with PCNA. CTF8 exists as a dimer with DSCC1.

It localises to the nucleus. Its function is as follows. Chromosome cohesion factor involved in sister chromatid cohesion and fidelity of chromosome transmission. Component of one of the cell nuclear antigen loader complexes, CTF18-replication factor C (CTF18-RFC), which consists of CTF18, CTF8, DSCC1, RFC2, RFC3, RFC4 and RFC5. The CTF18-RFC complex binds to single-stranded and primed DNAs and has weak ATPase activity that is stimulated the presence of primed DNA, replication protein A (RPA) and proliferating cell nuclear antigen (PCNA). The CTF18-RFC complex catalyzes the ATP-dependent loading of PCNA onto primed and gapped DNA. It also interacts with and stimulates POLH, which is suggestive of a protein network that coordinates DNA repair, recombination and chromosome cohesion reactions with replication fork progression. In Homo sapiens (Human), this protein is Chromosome transmission fidelity protein 8 homolog.